Consider the following 51-residue polypeptide: Putative inactivation escape 1 protein (51 aa).

In terms of tissue distribution, highly expressed in pancreas, heart and liver followed by brain, placenta, lung, skeletal muscle and kidney. Mostly expressed in females.

In Homo sapiens (Human), this protein is Putative inactivation escape 1 protein (INE1).